Reading from the N-terminus, the 377-residue chain is tRNA-specific 2-thiouridylase MnmA (377 aa).

ATP is bound by residues 12–19 (GMSGGVDS) and Met38. The interval 98–100 (NPD) is interaction with target base in tRNA. Cys103 functions as the Nucleophile in the catalytic mechanism. A disulfide bond links Cys103 and Cys200. Gly127 is an ATP binding site. Residues 150–152 (KDQ) are interaction with tRNA. Catalysis depends on Cys200, which acts as the Cysteine persulfide intermediate. Positions 314–315 (RY) are interaction with tRNA.

It belongs to the MnmA/TRMU family.

It is found in the cytoplasm. It catalyses the reaction S-sulfanyl-L-cysteinyl-[protein] + uridine(34) in tRNA + AH2 + ATP = 2-thiouridine(34) in tRNA + L-cysteinyl-[protein] + A + AMP + diphosphate + H(+). In terms of biological role, catalyzes the 2-thiolation of uridine at the wobble position (U34) of tRNA, leading to the formation of s(2)U34. In Limosilactobacillus reuteri (strain DSM 20016) (Lactobacillus reuteri), this protein is tRNA-specific 2-thiouridylase MnmA.